A 67-amino-acid polypeptide reads, in one-letter code: ATP synthase F(0) complex subunit 8 (67 aa).

The helical transmembrane segment at 8–24 (TWFITIVSMLLSLFILM) threads the bilayer. Residue Lys-54 is modified to N6-acetyllysine; alternate. Residue Lys-54 is modified to N6-succinyllysine; alternate. N6-acetyllysine is present on Lys-57.

It belongs to the ATPase protein 8 family. As to quaternary structure, component of the ATP synthase complex composed at least of ATP5F1A/subunit alpha, ATP5F1B/subunit beta, ATP5MC1/subunit c (homooctomer), MT-ATP6/subunit a, MT-ATP8/subunit 8, ATP5ME/subunit e, ATP5MF/subunit f, ATP5MG/subunit g, ATP5MK/subunit k, ATP5MJ/subunit j, ATP5F1C/subunit gamma, ATP5F1D/subunit delta, ATP5F1E/subunit epsilon, ATP5PF/subunit F6, ATP5PB/subunit b, ATP5PD/subunit d, ATP5PO/subunit OSCP. ATP synthase complex consists of a soluble F(1) head domain (subunits alpha(3) and beta(3)) - the catalytic core - and a membrane F(0) domain - the membrane proton channel (subunits c, a, 8, e, f, g, k and j). These two domains are linked by a central stalk (subunits gamma, delta, and epsilon) rotating inside the F1 region and a stationary peripheral stalk (subunits F6, b, d, and OSCP). Interacts with PRICKLE3.

It localises to the mitochondrion membrane. Functionally, subunit 8, of the mitochondrial membrane ATP synthase complex (F(1)F(0) ATP synthase or Complex V) that produces ATP from ADP in the presence of a proton gradient across the membrane which is generated by electron transport complexes of the respiratory chain. ATP synthase complex consist of a soluble F(1) head domain - the catalytic core - and a membrane F(1) domain - the membrane proton channel. These two domains are linked by a central stalk rotating inside the F(1) region and a stationary peripheral stalk. During catalysis, ATP synthesis in the catalytic domain of F(1) is coupled via a rotary mechanism of the central stalk subunits to proton translocation. In vivo, can only synthesize ATP although its ATP hydrolase activity can be activated artificially in vitro. Part of the complex F(0) domain. The protein is ATP synthase F(0) complex subunit 8 of Dasypus novemcinctus (Nine-banded armadillo).